The sequence spans 123 residues: Small ribosomal subunit protein uS12 (123 aa).

Aspartate 89 is modified (3-methylthioaspartic acid).

It belongs to the universal ribosomal protein uS12 family. As to quaternary structure, part of the 30S ribosomal subunit. Contacts proteins S8 and S17. May interact with IF1 in the 30S initiation complex.

Its function is as follows. With S4 and S5 plays an important role in translational accuracy. Functionally, interacts with and stabilizes bases of the 16S rRNA that are involved in tRNA selection in the A site and with the mRNA backbone. Located at the interface of the 30S and 50S subunits, it traverses the body of the 30S subunit contacting proteins on the other side and probably holding the rRNA structure together. The combined cluster of proteins S8, S12 and S17 appears to hold together the shoulder and platform of the 30S subunit. The chain is Small ribosomal subunit protein uS12 from Rhodopseudomonas palustris (strain HaA2).